Here is a 250-residue protein sequence, read N- to C-terminus: Small ribosomal subunit protein uS3 (250 aa).

The region spanning 39–111 (IRTLIKNNYP…KVQINIFEVK (73 aa)) is the KH type-2 domain.

It belongs to the universal ribosomal protein uS3 family. Part of the 30S ribosomal subunit. Forms a tight complex with proteins S10 and S14.

In terms of biological role, binds the lower part of the 30S subunit head. Binds mRNA in the 70S ribosome, positioning it for translation. This is Small ribosomal subunit protein uS3 from Alder yellows phytoplasma.